A 107-amino-acid chain; its full sequence is MTTEIKKLDPDTAIDIAYDIFLEMAGENLDPAYILLFNLQFEERGGVEFVETADDWEEEIGVLIDPEEYAEVWVGLVNKQDEMDDVFAKFLISHREEDREFHVIWKK.

The protein belongs to the putative dsDNA mimic protein family.

In terms of biological role, may act as a double-stranded DNA (dsDNA) mimic. Probably regulates the activity of a dsDNA-binding protein. In Haemophilus influenzae (strain 86-028NP), this protein is Putative double-stranded DNA mimic protein NTHI1680.